A 271-amino-acid polypeptide reads, in one-letter code: Probable L,D-transpeptidase 3 (271 aa).

The 144-residue stretch at 127–270 (VVGVASISQH…VDIGDPVIVQ (144 aa)) folds into the L,D-TPase catalytic domain. His228 (proton donor/acceptor) is an active-site residue. The Nucleophile role is filled by Cys246.

The protein operates within cell wall biogenesis; peptidoglycan biosynthesis. Is irreversibly inactivated by the beta-lactam carbapenems via the formation of a covalent adduct resulting from acylation of the catalytic Cys. Imipenem is the most efficient drug for in vitro LdtMt3/Rv1433 inactivation. In terms of biological role, probable L,D-transpeptidase that may perform as-yet-unknown cross-linking reactions in M.tuberculosis. Is not able to generate 3-&gt;3 cross-links in peptidoglycan, using tetrapeptide stems as acyl donor substrates. May function in the anchoring of proteins to peptidoglycan. The protein is Probable L,D-transpeptidase 3 of Mycobacterium tuberculosis (strain ATCC 25618 / H37Rv).